Reading from the N-terminus, the 226-residue chain is Cytidylate kinase (226 aa).

An ATP-binding site is contributed by glycine 10 to threonine 18.

Belongs to the cytidylate kinase family. Type 1 subfamily.

It is found in the cytoplasm. The catalysed reaction is CMP + ATP = CDP + ADP. The enzyme catalyses dCMP + ATP = dCDP + ADP. This Caldicellulosiruptor saccharolyticus (strain ATCC 43494 / DSM 8903 / Tp8T 6331) protein is Cytidylate kinase.